Consider the following 493-residue polypeptide: Extracellular tyrosine-protein kinase PKDCC (493 aa).

Positions 1 to 32 (MRRRRAAVAAGFCASFLLGSVLNVLFAPGSEP) are cleaved as a signal peptide. The tract at residues 28-128 (PGSEPPRPGQ…PGPGSPGPGP (101 aa)) is disordered. Residues 30–46 (SEPPRPGQSPEPSPAPG) are compositionally biased toward pro residues. Residues 52 to 69 (GRGELARQIRARYEEVQR) show a composition bias toward basic and acidic residues. Composition is skewed to pro residues over residues 95–105 (PGLPRPRPPWA) and 114–127 (GWPPAPGPGSPGPG). Asparagine 137 carries an N-linked (GlcNAc...) asparagine glycan. One can recognise a Protein kinase domain in the interval 138 to 493 (VSGAQYMGSG…NKTTYVKASG (356 aa)). ATP-binding positions include 144-152 (MGSGYTKAV) and lysine 166. Tyrosine 148 carries the post-translational modification Phosphotyrosine. Serine 177 is modified (phosphoserine). Aspartate 278 (proton acceptor) is an active-site residue. N-linked (GlcNAc...) asparagine glycans are attached at residues asparagine 320, asparagine 369, asparagine 400, asparagine 460, and asparagine 484.

The protein belongs to the protein kinase superfamily. Post-translationally, N-glycosylated. In terms of processing, phosphorylated on tyrosines; probably via autophosphorylation. In terms of tissue distribution, highly expressed in platelets.

Its subcellular location is the secreted. The protein localises to the golgi apparatus. The catalysed reaction is L-tyrosyl-[protein] + ATP = O-phospho-L-tyrosyl-[protein] + ADP + H(+). Its function is as follows. Secreted tyrosine-protein kinase that mediates phosphorylation of extracellular proteins and endogenous proteins in the secretory pathway, which is essential for patterning at organogenesis stages. Mediates phosphorylation of MMP1, MMP13, MMP14, MMP19 and ERP29. Probably plays a role in platelets: rapidly and quantitatively secreted from platelets in response to stimulation of platelet degranulation. May also have serine/threonine protein kinase activity. Required for longitudinal bone growth through regulation of chondrocyte differentiation. May be indirectly involved in protein transport from the Golgi apparatus to the plasma membrane. In Homo sapiens (Human), this protein is Extracellular tyrosine-protein kinase PKDCC.